A 93-amino-acid polypeptide reads, in one-letter code: Small ribosomal subunit protein uS19 (93 aa).

The protein belongs to the universal ribosomal protein uS19 family.

Protein S19 forms a complex with S13 that binds strongly to the 16S ribosomal RNA. This Frankia alni (strain DSM 45986 / CECT 9034 / ACN14a) protein is Small ribosomal subunit protein uS19.